The sequence spans 655 residues: Methyl-accepting chemotaxis protein McpC (655 aa).

Over 1–8 (MFKKLHMK) the chain is Cytoplasmic. Residues 9–29 (IAVFVSIMLIITVVLLMLSSY) traverse the membrane as a helical segment. Over 30–276 (LTLKPMITED…LMWISDKMNR (247 aa)) the chain is Extracellular. The region spanning 148–225 (WTEPYKDVVT…SNQGKNISKD (78 aa)) is the Cache domain. Residues 277–297 (ANLWISLIALIITIILSYFLA) form a helical membrane-spanning segment. The HAMP domain maps to 298-350 (KTITGPIQQLIVKTKAVSAGDLTVRAESKSKDEVGILTRDFNLMVENMKEMVE). Over 298-655 (KTITGPIQQL…LMNTIAKFTL (358 aa)) the chain is Cytoplasmic. The Methyl-accepting transducer domain occupies 369-619 (VAAETNETSG…ESAAAAEEVN (251 aa)).

This sequence belongs to the methyl-accepting chemotaxis (MCP) protein family. Interacts with FloT. In terms of processing, some glutamine residues are deamidated to glutamate by CheD and subsequently methylated.

The protein localises to the cell membrane. The protein resides in the membrane raft. Chemotactic-signal transducers respond to changes in the concentration of attractants and repellents in the environment, transduce a signal from the outside to the inside of the cell, and facilitate sensory adaptation through the variation of the level of methylation. All amino acids serve as attractants in B.subtilis, they appear to cause an increase in the turnover methyl groups, leading to methylation of an unidentified acceptor, while repellents have been shown to cause a decrease in methyl group turnover. The methyl groups are added by a methyltransferase and removed by a methylesterase. McpC is required for taxis to cysteine, proline, threonine, glycine, serine, lysine, valine and arginine and for aspartate, glutamine, histidine and glutamate. Primarily mediates response to positive stimulus of PTS carbohydrates. Greatly influences the duration or magnitude of the response to negative PTS carbohydrate stimulus. In Bacillus subtilis (strain 168), this protein is Methyl-accepting chemotaxis protein McpC (mcpC).